Reading from the N-terminus, the 418-residue chain is Protein fuzzy homolog (418 aa).

It belongs to the fuzzy family. In terms of assembly, interacts with rsg1. Interacts with intu and wdpcp; fuz, intu and wdpcp probably form the core CPLANE (ciliogenesis and planar polarity effectors) complex.

It localises to the cytoplasm. The protein resides in the cytoskeleton. It is found in the cilium basal body. Functionally, probable planar cell polarity effector involved in cilium biogenesis. Proposed to function as core component of the CPLANE (ciliogenesis and planar polarity effectors) complex involved in the recruitment of peripheral IFT-A proteins to basal bodies. May regulate protein and membrane transport to the cilium. May control the organization of the apical actin cytoskeleton, which is essential for the normal orientation of elongating ciliary microtubules. The sequence is that of Protein fuzzy homolog (fuz) from Xenopus tropicalis (Western clawed frog).